A 392-amino-acid chain; its full sequence is Odorant receptor 9a (392 aa).

Topologically, residues 1–41 are cytoplasmic; the sequence is MSDKVKGKKQEEKDQSLRVQILVYRCMGIDLWSPTMANDRP. Residues 42-62 form a helical membrane-spanning segment; the sequence is WLTFVTMGPLFLFMVPMFLAA. At 63-74 the chain is on the extracellular side; the sequence is HEYITQVSLLSD. The helical transmembrane segment at 75–95 threads the bilayer; that stretch reads TLGSTFASMLTLVKFLLFCYH. At 96-141 the chain is on the cytoplasmic side; that stretch reads RKEFVGLIYHIRAILAKEIEVWPDAREIIEVENQSDQMLSLTYTRC. Residues 142 to 162 traverse the membrane as a helical segment; it reads FGLAGIFAALKPFVGIILSSI. The Extracellular segment spans residues 163–202; it reads RGDEIHLELPHNGVYPYDLQVVMFYVPTYLWNVMASYSAV. The helical transmembrane segment at 203 to 223 threads the bilayer; the sequence is TMALCVDSLLFFFTYNVCAIF. The Cytoplasmic portion of the chain corresponds to 224–268; it reads KIAKHRMIHLPAVGGKEELEGLVQVLLLHQKGLQIADHIADKYRP. The chain crosses the membrane as a helical span at residues 269–289; that stretch reads LIFLQFFLSALQICFIGFQVA. The Extracellular portion of the chain corresponds to 290 to 297; the sequence is DLFPNPQS. A helical membrane pass occupies residues 298-318; the sequence is LYFIAFVGSLLIALFIYSKCG. The Cytoplasmic portion of the chain corresponds to 319-362; that stretch reads ENIKSASLDFGNGLYETNWTDFSPPTKRALLIAAMRAQRPCQMK. Residues 363 to 383 traverse the membrane as a helical segment; that stretch reads GYFFEASMATFSTIVRSAVSY. At 384 to 392 the chain is on the extracellular side; sequence IMMLRSFNA.

Belongs to the insect chemoreceptor superfamily. Heteromeric odorant receptor channel (TC 1.A.69) family. Or1a subfamily. In terms of assembly, interacts with Orco. Complexes exist early in the endomembrane system in olfactory sensory neurons (OSNs), coupling these complexes to the conserved ciliary trafficking pathway. Expressed in olfactory sensory neurons in the antenna.

It localises to the cell membrane. In terms of biological role, odorant receptor which mediates acceptance or avoidance behavior, depending on its substrates. The odorant receptor repertoire encodes a large collection of odor stimuli that vary widely in identity, intensity, and duration. May form a complex with Orco to form odorant-sensing units, providing sensitive and prolonged odorant signaling and calcium permeability. This Drosophila melanogaster (Fruit fly) protein is Odorant receptor 9a (Or9a).